The chain runs to 134 residues: Small ribosomal subunit protein uS11 (134 aa).

This sequence belongs to the universal ribosomal protein uS11 family. As to quaternary structure, part of the 30S ribosomal subunit. Interacts with proteins S7 and S18. Binds to IF-3.

Located on the platform of the 30S subunit, it bridges several disparate RNA helices of the 16S rRNA. Forms part of the Shine-Dalgarno cleft in the 70S ribosome. In Janthinobacterium sp. (strain Marseille) (Minibacterium massiliensis), this protein is Small ribosomal subunit protein uS11.